We begin with the raw amino-acid sequence, 148 residues long: Large ribosomal subunit protein bL9 (148 aa).

The protein belongs to the bacterial ribosomal protein bL9 family.

Functionally, binds to the 23S rRNA. In Stutzerimonas stutzeri (strain A1501) (Pseudomonas stutzeri), this protein is Large ribosomal subunit protein bL9.